Here is a 140-residue protein sequence, read N- to C-terminus: 3-hydroxyacyl-[acyl-carrier-protein] dehydratase FabZ (140 aa).

The active site involves H47.

This sequence belongs to the thioester dehydratase family. FabZ subfamily.

It localises to the cytoplasm. The enzyme catalyses a (3R)-hydroxyacyl-[ACP] = a (2E)-enoyl-[ACP] + H2O. In terms of biological role, involved in unsaturated fatty acids biosynthesis. Catalyzes the dehydration of short chain beta-hydroxyacyl-ACPs and long chain saturated and unsaturated beta-hydroxyacyl-ACPs. This is 3-hydroxyacyl-[acyl-carrier-protein] dehydratase FabZ from Streptococcus mutans serotype c (strain ATCC 700610 / UA159).